The chain runs to 260 residues: ATP synthase subunit a (260 aa).

7 helical membrane passes run I30 to V50, L96 to V116, F125 to A145, F151 to I171, L187 to S207, V213 to L233, and E234 to N254.

Belongs to the ATPase A chain family. As to quaternary structure, F-type ATPases have 2 components, CF(1) - the catalytic core - and CF(0) - the membrane proton channel. CF(1) has five subunits: alpha(3), beta(3), gamma(1), delta(1), epsilon(1). CF(0) has three main subunits: a(1), b(2) and c(9-12). The alpha and beta chains form an alternating ring which encloses part of the gamma chain. CF(1) is attached to CF(0) by a central stalk formed by the gamma and epsilon chains, while a peripheral stalk is formed by the delta and b chains.

It is found in the cell inner membrane. In terms of biological role, key component of the proton channel; it plays a direct role in the translocation of protons across the membrane. In Novosphingobium aromaticivorans (strain ATCC 700278 / DSM 12444 / CCUG 56034 / CIP 105152 / NBRC 16084 / F199), this protein is ATP synthase subunit a.